The primary structure comprises 225 residues: Phosphoserine phosphatase (225 aa).

The residue at position 1 (methionine 1) is an N-acetylmethionine. The active-site Nucleophile is the aspartate 20. Residues aspartate 20 and aspartate 22 each contribute to the Mg(2+) site. Position 20-22 (aspartate 20–aspartate 22) interacts with L-serine. The Proton donor role is filled by aspartate 22. Methionine 52 provides a ligand contact to O-phospho-L-serine. Residue glycine 53 participates in phosphate binding. L-serine-binding positions include serine 109–glycine 111 and lysine 158. O-phospho-L-serine is bound by residues serine 109–glycine 111 and lysine 158. Mg(2+) is bound at residue aspartate 179. Threonine 182 contributes to the O-phospho-L-serine binding site. Position 182 (threonine 182) interacts with phosphate.

The protein belongs to the HAD-like hydrolase superfamily. SerB family. In terms of assembly, homodimer. Requires Mg(2+) as cofactor.

The protein localises to the cytoplasm. It is found in the cytosol. The enzyme catalyses O-phospho-L-serine + H2O = L-serine + phosphate. It carries out the reaction O-phospho-D-serine + H2O = D-serine + phosphate. Its pathway is amino-acid biosynthesis; L-serine biosynthesis; L-serine from 3-phospho-D-glycerate: step 3/3. Its function is as follows. Catalyzes the last irreversible step in the biosynthesis of L-serine from carbohydrates, the dephosphorylation of O-phospho-L-serine to L-serine. L-serine can then be used in protein synthesis, to produce other amino acids, in nucleotide metabolism or in glutathione synthesis, or can be racemized to D-serine, a neuromodulator. May also act on O-phospho-D-serine. This is Phosphoserine phosphatase from Rattus norvegicus (Rat).